Consider the following 846-residue polypeptide: Circadian locomoter output cycles protein kaput (846 aa).

The Nuclear localization signal motif lies at 32–47 (DKAKRVSRNKSEKKRR). Residues 34 to 84 (AKRVSRNKSEKKRRDQFNVLIKELGSMLPGNARKMDKSTVLQKSIDFLRKH) form the bHLH domain. Ser38 and Ser42 each carry phosphoserine. Lys67 participates in a covalent cross-link: Glycyl lysine isopeptide (Lys-Gly) (interchain with G-Cter in SUMO1). PAS domains are found at residues 107–177 (NEEF…LLES) and 262–332 (FIKE…MQYG). The 44-residue stretch at 336–379 (SCYYRFLTKGQQWIWLQTHYYITYHQWNSRPEFIVCTHTVVSYA) folds into the PAC domain. The tract at residues 371–845 (CTHTVVSYAE…SLPDPSKVQP (475 aa)) is interaction with NR3C1. Disordered regions lie at residues 392–411 (EESL…SDNR) and 420–495 (ALER…SSLT). Phosphoserine is present on Ser408. Ser427 is modified (phosphoserine; by GSK3-beta). At Ser431 the chain carries Phosphoserine. Residues 447–463 (DPSSTPTKIPTDTSTPP) are compositionally biased toward polar residues. Residues 450 to 570 (STPTKIPTDT…QGLQMFLQQS (121 aa)) form an interaction with SIRT1 region. Residues Thr451 and Thr461 each carry the phosphothreonine; by CDK5 modification. A compositionally biased stretch (low complexity) spans 478–493 (SSFSSQSINSQSVGSS). An implicated in the circadian rhythmicity region spans residues 514–564 (FQFSAQLGAMQHLKDQLEQRTRMIEANIHRQQEELRKIQEQLQMVHGQGLQ). Composition is skewed to low complexity over residues 624–637 (QQQT…QSQQ) and 644–654 (SQQTSLPSQTQ). Disordered regions lie at residues 624–654 (QQQT…SQTQ), 764–783 (EQQL…QPPQ), and 811–846 (STFP…VQPQ). Residues 811-829 (STFPQSHHQQHQSQQQQQL) are compositionally biased toward low complexity. Lys842 participates in a covalent cross-link: Glycyl lysine isopeptide (Lys-Gly) (interchain with G-Cter in SUMO1).

Component of the circadian clock oscillator which includes the CRY proteins, CLOCK or NPAS2, BMAL1 or BMAL2, CSNK1D and/or CSNK1E, TIMELESS and the PER proteins. Interacts with KMT2A; in a circadian manner. Forms a heterodimer with BMAL1. The CLOCK-BMAL1 heterodimer is required for E-box-dependent transactivation, for CLOCK nuclear translocation and degradation, and for phosphorylation of both CLOCK and BMAL1. Interacts with NR3C1 in a ligand-dependent fashion. Interacts with ESR1 and estrogen stimulates this interaction. Interacts with the complex p35/CDK5. Interacts with RELA/p65. Interacts with KAT2B, CREBBP, EP300. Interacts with ID1 and ID3. Interacts with ID2. Interacts with MTA1. Interacts with OGA. Interacts with SIRT1. Interacts with CIPC. Interacts with EZH2. Interacts with EIF4E, PIWIL1 and DDX4. Interacts with PER2 and CRY1 and the interaction with PER and CRY proteins requires translocation to the nucleus. Interacts with PER1 and CRY2. Interaction of the CLOCK-BMAL1 heterodimer with PER or CRY inhibits transcription activation. Interaction of the CLOCK-BMAL1 with CRY1 is independent of DNA but with PER2 is off DNA. The CLOCK-BMAL1 heterodimer interacts with GSK3B. Interacts with KDM5A. Interacts with MYBBP1A. Interacts with THRAP3. Interacts with MED1; this interaction requires the presence of THRAP3. Interacts with NCOA2. The CLOCK-BMAL1 heterodimer interacts with PASD1. Interacts with ASS1 and IMPDH2; in a circadian manner. Interacts with NDUFA9. Interacts with PIWIL2 (via PIWI domain). Interacts with HNF4A. In terms of processing, ubiquitinated, leading to its proteasomal degradation. O-glycosylated; contains O-GlcNAc. O-glycosylation by OGT prevents protein degradation by inhibiting ubiquitination. It also stabilizes the CLOCK-BMAL1 heterodimer thereby increasing CLOCK-BMAL1-mediated transcriptional activation of PER1/2/3 and CRY1/2. Post-translationally, phosphorylation is dependent on the CLOCK-BMAL1 heterodimer formation. Phosphorylation enhances the transcriptional activity, alters the subcellular localization and decreases the stability of the heterodimer by promoting its degradation. Phosphorylation shows circadian variations in the liver. May be phosphorylated by CSNK1D and CKSN1E. In terms of processing, sumoylation enhances its transcriptional activity and interaction with ESR1, resulting in up-regulation of ESR1 activity. Estrogen stimulates sumoylation. Desumoylation by SENP1 negatively regulates its transcriptional activity. Sumoylation stimulates cell proliferation and increases the proportion of S phase cells in breast cancer cell lines. Undergoes lysosome-mediated degradation in a time-dependent manner in the liver. As to expression, hair follicles (at protein level). Expressed in all tissues examined including spleen, thymus, prostate, testis, ovary, small intestine, colon, leukocytes, heart, brain, placenta, lung, liver, skeletal muscle, kidney and pancreas. Highest levels in testis and skeletal muscle. Low levels in thymus, lung and liver. Expressed in all brain regions with highest levels in cerebellum. Highly expressed in the suprachiasmatic nucleus (SCN).

It localises to the nucleus. It is found in the cytoplasm. Its subcellular location is the cytosol. It carries out the reaction L-lysyl-[protein] + acetyl-CoA = N(6)-acetyl-L-lysyl-[protein] + CoA + H(+). With respect to regulation, there is conflicting data about the effect of NAD cofactors on activity. PubMed:11441146 suggests that the redox state of the cell can modulate the transcriptional activity of the CLOCK-BMAL1 heterodimer; NADH and NADPH enhance the DNA-binding activity of the heterodimer. PubMed:23229515 reports that NADH and NADPH have no significant effect on DNA-binding activity of the CLOCK-BMAL1 heterodimer. Functionally, transcriptional activator which forms a core component of the circadian clock. The circadian clock, an internal time-keeping system, regulates various physiological processes through the generation of approximately 24 hour circadian rhythms in gene expression, which are translated into rhythms in metabolism and behavior. It is derived from the Latin roots 'circa' (about) and 'diem' (day) and acts as an important regulator of a wide array of physiological functions including metabolism, sleep, body temperature, blood pressure, endocrine, immune, cardiovascular, and renal function. Consists of two major components: the central clock, residing in the suprachiasmatic nucleus (SCN) of the brain, and the peripheral clocks that are present in nearly every tissue and organ system. Both the central and peripheral clocks can be reset by environmental cues, also known as Zeitgebers (German for 'timegivers'). The predominant Zeitgeber for the central clock is light, which is sensed by retina and signals directly to the SCN. The central clock entrains the peripheral clocks through neuronal and hormonal signals, body temperature and feeding-related cues, aligning all clocks with the external light/dark cycle. Circadian rhythms allow an organism to achieve temporal homeostasis with its environment at the molecular level by regulating gene expression to create a peak of protein expression once every 24 hours to control when a particular physiological process is most active with respect to the solar day. Transcription and translation of core clock components (CLOCK, NPAS2, BMAL1, BMAL2, PER1, PER2, PER3, CRY1 and CRY2) plays a critical role in rhythm generation, whereas delays imposed by post-translational modifications (PTMs) are important for determining the period (tau) of the rhythms (tau refers to the period of a rhythm and is the length, in time, of one complete cycle). A diurnal rhythm is synchronized with the day/night cycle, while the ultradian and infradian rhythms have a period shorter and longer than 24 hours, respectively. Disruptions in the circadian rhythms contribute to the pathology of cardiovascular diseases, cancer, metabolic syndromes and aging. A transcription/translation feedback loop (TTFL) forms the core of the molecular circadian clock mechanism. Transcription factors, CLOCK or NPAS2 and BMAL1 or BMAL2, form the positive limb of the feedback loop, act in the form of a heterodimer and activate the transcription of core clock genes and clock-controlled genes (involved in key metabolic processes), harboring E-box elements (5'-CACGTG-3') within their promoters. The core clock genes: PER1/2/3 and CRY1/2 which are transcriptional repressors form the negative limb of the feedback loop and interact with the CLOCK|NPAS2-BMAL1|BMAL2 heterodimer inhibiting its activity and thereby negatively regulating their own expression. This heterodimer also activates nuclear receptors NR1D1/2 and RORA/B/G, which form a second feedback loop and which activate and repress BMAL1 transcription, respectively. Regulates the circadian expression of ICAM1, VCAM1, CCL2, THPO and MPL and also acts as an enhancer of the transactivation potential of NF-kappaB. Plays an important role in the homeostatic regulation of sleep. The CLOCK-BMAL1 heterodimer regulates the circadian expression of SERPINE1/PAI1, VWF, B3, CCRN4L/NOC, NAMPT, DBP, MYOD1, PPARGC1A, PPARGC1B, SIRT1, GYS2, F7, NGFR, GNRHR, BHLHE40/DEC1, ATF4, MTA1, KLF10 and also genes implicated in glucose and lipid metabolism. Promotes rhythmic chromatin opening, regulating the DNA accessibility of other transcription factors. The CLOCK-BMAL2 heterodimer activates the transcription of SERPINE1/PAI1 and BHLHE40/DEC1. The preferred binding motif for the CLOCK-BMAL1 heterodimer is 5'-CACGTGA-3', which contains a flanking adenine nucleotide at the 3-prime end of the canonical 6-nucleotide E-box sequence. CLOCK specifically binds to the half-site 5'-CAC-3', while BMAL1 binds to the half-site 5'-GTGA-3'. The CLOCK-BMAL1 heterodimer also recognizes the non-canonical E-box motifs 5'-AACGTGA-3' and 5'-CATGTGA-3'. CLOCK has an intrinsic acetyltransferase activity, which enables circadian chromatin remodeling by acetylating histones and nonhistone proteins, including its own partner BMAL1. Represses glucocorticoid receptor NR3C1/GR-induced transcriptional activity by reducing the association of NR3C1/GR to glucocorticoid response elements (GREs) via the acetylation of multiple lysine residues located in its hinge region. The acetyltransferase activity of CLOCK is as important as its transcription activity in circadian control. Acetylates metabolic enzymes IMPDH2 and NDUFA9 in a circadian manner. Facilitated by BMAL1, rhythmically interacts and acetylates argininosuccinate synthase 1 (ASS1) leading to enzymatic inhibition of ASS1 as well as the circadian oscillation of arginine biosynthesis and subsequent ureagenesis. Drives the circadian rhythm of blood pressure through transcriptional activation of ATP1B1. The polypeptide is Circadian locomoter output cycles protein kaput (CLOCK) (Homo sapiens (Human)).